Here is an 815-residue protein sequence, read N- to C-terminus: Lon protease 1 (815 aa).

The 198-residue stretch at 14 to 211 (IAILPLLGTV…KLNEVLTREL (198 aa)) folds into the Lon N-terminal domain. An ATP-binding site is contributed by 370-377 (GPPGVGKT). The 182-residue stretch at 606-787 (TDRPGIVTGL…GQVIELALRA (182 aa)) folds into the Lon proteolytic domain. Catalysis depends on residues Ser693 and Lys736.

The protein belongs to the peptidase S16 family. In terms of assembly, homohexamer. Organized in a ring with a central cavity.

It localises to the cytoplasm. It catalyses the reaction Hydrolysis of proteins in presence of ATP.. ATP-dependent serine protease that mediates the selective degradation of mutant and abnormal proteins as well as certain short-lived regulatory proteins. Required for cellular homeostasis and for survival from DNA damage and developmental changes induced by stress. Degrades polypeptides processively to yield small peptide fragments that are 5 to 10 amino acids long. Binds to DNA in a double-stranded, site-specific manner. The polypeptide is Lon protease 1 (Herpetosiphon aurantiacus (strain ATCC 23779 / DSM 785 / 114-95)).